The following is a 540-amino-acid chain: Chaperonin GroEL 2 (540 aa).

ATP-binding positions include 30-33 (TLGP), Lys51, 87-91 (DGTTT), Gly415, 480-482 (NAL), and Asp496.

This sequence belongs to the chaperonin (HSP60) family. As to quaternary structure, forms a cylinder of 14 subunits composed of two heptameric rings stacked back-to-back. Interacts with the co-chaperonin GroES.

The protein localises to the cytoplasm. The enzyme catalyses ATP + H2O + a folded polypeptide = ADP + phosphate + an unfolded polypeptide.. Functionally, together with its co-chaperonin GroES, plays an essential role in assisting protein folding. The GroEL-GroES system forms a nano-cage that allows encapsulation of the non-native substrate proteins and provides a physical environment optimized to promote and accelerate protein folding. In Protochlamydia amoebophila (strain UWE25), this protein is Chaperonin GroEL 2.